A 386-amino-acid polypeptide reads, in one-letter code: Galactokinase (386 aa).

Substrate is bound at residue 35 to 38 (EHTD). ATP-binding positions include Ser69 and 125–131 (GAGLSSS). Residues Ser131 and Glu163 each contribute to the Mg(2+) site. Residue Asp175 is the Proton acceptor of the active site. A substrate-binding site is contributed by Tyr224.

The protein belongs to the GHMP kinase family. GalK subfamily.

It is found in the cytoplasm. The catalysed reaction is alpha-D-galactose + ATP = alpha-D-galactose 1-phosphate + ADP + H(+). It functions in the pathway carbohydrate metabolism; galactose metabolism. Its function is as follows. Catalyzes the transfer of the gamma-phosphate of ATP to D-galactose to form alpha-D-galactose-1-phosphate (Gal-1-P). This Vibrio vulnificus (strain CMCP6) protein is Galactokinase.